A 458-amino-acid polypeptide reads, in one-letter code: tRNA modification GTPase MnmE (458 aa).

(6S)-5-formyl-5,6,7,8-tetrahydrofolate is bound by residues Arg-23, Glu-87, and Arg-126. A TrmE-type G domain is found at 224 to 380 (GLSMVIVGKP…LKSKIKDLFF (157 aa)). Asn-234 serves as a coordination point for K(+). Residues 234–239 (NVGKSS), 253–259 (TDIAGTT), and 278–281 (DTAG) contribute to the GTP site. Residue Ser-238 participates in Mg(2+) binding. K(+)-binding residues include Thr-253, Ile-255, and Thr-258. A Mg(2+)-binding site is contributed by Thr-259. (6S)-5-formyl-5,6,7,8-tetrahydrofolate is bound at residue Lys-458.

This sequence belongs to the TRAFAC class TrmE-Era-EngA-EngB-Septin-like GTPase superfamily. TrmE GTPase family. As to quaternary structure, homodimer. Heterotetramer of two MnmE and two MnmG subunits. The cofactor is K(+).

It localises to the cytoplasm. Its function is as follows. Exhibits a very high intrinsic GTPase hydrolysis rate. Involved in the addition of a carboxymethylaminomethyl (cmnm) group at the wobble position (U34) of certain tRNAs, forming tRNA-cmnm(5)s(2)U34. The protein is tRNA modification GTPase MnmE of Clostridium perfringens (strain ATCC 13124 / DSM 756 / JCM 1290 / NCIMB 6125 / NCTC 8237 / Type A).